We begin with the raw amino-acid sequence, 523 residues long: ATP synthase subunit beta, mitochondrial (523 aa).

A mitochondrion-targeting transit peptide spans 1-19; sequence MFSRVAKTSFSAVRAAKSQ. Residue 201–208 coordinates ATP; that stretch reads GGAGVGKT.

This sequence belongs to the ATPase alpha/beta chains family. F-type ATPases have 2 components, CF(1) - the catalytic core - and CF(0) - the membrane proton channel. CF(1) has five subunits: alpha(3), beta(3), gamma(1), delta(1), epsilon(1). CF(0) has three main subunits: a, b and c.

The protein resides in the mitochondrion. Its subcellular location is the mitochondrion inner membrane. It catalyses the reaction ATP + H2O + 4 H(+)(in) = ADP + phosphate + 5 H(+)(out). Functionally, mitochondrial membrane ATP synthase (F(1)F(0) ATP synthase or Complex V) produces ATP from ADP in the presence of a proton gradient across the membrane which is generated by electron transport complexes of the respiratory chain. F-type ATPases consist of two structural domains, F(1) - containing the extramembraneous catalytic core, and F(0) - containing the membrane proton channel, linked together by a central stalk and a peripheral stalk. During catalysis, ATP synthesis in the catalytic domain of F(1) is coupled via a rotary mechanism of the central stalk subunits to proton translocation. Subunits alpha and beta form the catalytic core in F(1). Rotation of the central stalk against the surrounding alpha(3)beta(3) subunits leads to hydrolysis of ATP in three separate catalytic sites on the beta subunits. The chain is ATP synthase subunit beta, mitochondrial from Hemicentrotus pulcherrimus (Sea urchin).